Here is a 306-residue protein sequence, read N- to C-terminus: Large ribosomal subunit protein bL19m (306 aa).

Over residues 34-43 the composition is skewed to basic and acidic residues; sequence ENQEEQKKEA. Positions 34 to 53 are disordered; that stretch reads ENQEEQKKEAPPTTPTSPVN.

The protein belongs to the bacterial ribosomal protein bL19 family. As to quaternary structure, component of the mitochondrial ribosome large subunit (39S) which comprises a 16S rRNA and about 50 distinct proteins.

It localises to the mitochondrion. The chain is Large ribosomal subunit protein bL19m (mRpL19) from Drosophila melanogaster (Fruit fly).